A 328-amino-acid polypeptide reads, in one-letter code: V-set and immunoglobulin domain-containing protein 2 (328 aa).

The first 24 residues, 1–24 (MAWPLVGAFLCGHLLGFVCLSGLA), serve as a signal peptide directing secretion. One can recognise an Ig-like V-type domain in the interval 25–138 (VEVTVPTEPL…DFYTNGLGLI (114 aa)). Over 25–244 (VEVTVPTEPL…VTDSSEGRVA (220 aa)) the chain is Extracellular. C46 and C122 are joined by a disulfide. 3 N-linked (GlcNAc...) asparagine glycosylation sites follow: N139, N207, and N232. The region spanning 145-234 (PPSHPLCSQS…GSASCELNLS (90 aa)) is the Ig-like C2-type domain. Cysteines 167 and 218 form a disulfide. The helical transmembrane segment at 245–265 (GTLIGVLLGVLLLSVAAFCLI) threads the bilayer. The Cytoplasmic segment spans residues 266–328 (RFQKERKKEP…TTKSKLSMVV (63 aa)).

Expressed in the stomach, colon and prostate.

The protein resides in the membrane. The chain is V-set and immunoglobulin domain-containing protein 2 (Vsig2) from Mus musculus (Mouse).